Here is a 61-residue protein sequence, read N- to C-terminus: Small ribosomal subunit protein uS14 (61 aa).

Cysteine 24, cysteine 27, cysteine 40, and cysteine 43 together coordinate Zn(2+).

It belongs to the universal ribosomal protein uS14 family. Zinc-binding uS14 subfamily. As to quaternary structure, part of the 30S ribosomal subunit. Contacts proteins S3 and S10. Zn(2+) is required as a cofactor.

In terms of biological role, binds 16S rRNA, required for the assembly of 30S particles and may also be responsible for determining the conformation of the 16S rRNA at the A site. In Thermosipho africanus (strain TCF52B), this protein is Small ribosomal subunit protein uS14.